We begin with the raw amino-acid sequence, 218 residues long: Ropporin-1-like protein (218 aa).

Positions 17–54 (PELPDILKQFTKAAIRTQPADVLQWSAGYFSALSRGDP) constitute an RIIa domain.

The protein belongs to the ropporin family. Component of the axonemal radial spoke complex 1 (RS1), at least composed of spoke head proteins RSPH1, RSPH3, RSPH9 and the cilia-specific component RSPH4A or sperm-specific component RSPH6A, spoke stalk proteins RSPH14, DNAJB13, DYDC1, ROPN1L and NME5, and the anchor protein IQUB. May interact with AKAP3. Interacts with FSCB; the interaction increases upon spermatozoa capacitation conditions. Interacts with CFAP61. Post-translationally, sumoylated, sumoylation decreases upon spermatozoa capacitation conditions. As to expression, testis-specific. Expression is restricted to germ cells.

It localises to the cell projection. The protein localises to the cilium. It is found in the flagellum. In terms of biological role, functions as part of axonemal radial spoke complexes that play an important part in the motility of sperm and cilia. Important for male fertility. With ROPN1, involved in fibrous sheath integrity and sperm motility, plays a role in PKA-dependent signaling processes required for spermatozoa capacitation. This is Ropporin-1-like protein (Ropn1l) from Mus musculus (Mouse).